The following is a 449-amino-acid chain: Phosphoglucosamine mutase (449 aa).

The active-site Phosphoserine intermediate is the serine 104. The Mg(2+) site is built by serine 104, aspartate 243, aspartate 245, and aspartate 247. At serine 104 the chain carries Phosphoserine.

It belongs to the phosphohexose mutase family. Mg(2+) is required as a cofactor. Activated by phosphorylation.

It carries out the reaction alpha-D-glucosamine 1-phosphate = D-glucosamine 6-phosphate. Catalyzes the conversion of glucosamine-6-phosphate to glucosamine-1-phosphate. The polypeptide is Phosphoglucosamine mutase (Xanthomonas axonopodis pv. citri (strain 306)).